Here is a 471-residue protein sequence, read N- to C-terminus: Heat shock 70 kDa protein 13 (471 aa).

The N-terminal stretch at 1 to 22 is a signal peptide; that stretch reads MAGEMTILGSAVLTLLLAGYLA. Positions 315-337 are disordered; sequence ENDRKGPPTSDSELPKDKFSQAN.

The protein belongs to the heat shock protein 70 family. Binds UBQLN2.

It localises to the microsome. It is found in the endoplasmic reticulum. Has peptide-independent ATPase activity. The polypeptide is Heat shock 70 kDa protein 13 (HSPA13) (Bos taurus (Bovine)).